The following is a 148-amino-acid chain: Ribonuclease H (148 aa).

The RNase H type-1 domain maps to 1–142 (MSDSVELYTD…ADQLANRGVD (142 aa)). Mg(2+)-binding residues include Asp10, Glu48, Asp70, and Asp134. The segment at 129 to 148 (GNERADQLANRGVDEVRAKR) is disordered.

It belongs to the RNase H family. In terms of assembly, monomer. Mg(2+) is required as a cofactor.

The protein localises to the cytoplasm. The enzyme catalyses Endonucleolytic cleavage to 5'-phosphomonoester.. Functionally, endonuclease that specifically degrades the RNA of RNA-DNA hybrids. The polypeptide is Ribonuclease H (Pseudomonas putida (strain W619)).